The chain runs to 244 residues: 5-oxoprolinase subunit A (244 aa).

The protein belongs to the LamB/PxpA family. As to quaternary structure, forms a complex composed of PxpA, PxpB and PxpC.

The catalysed reaction is 5-oxo-L-proline + ATP + 2 H2O = L-glutamate + ADP + phosphate + H(+). In terms of biological role, catalyzes the cleavage of 5-oxoproline to form L-glutamate coupled to the hydrolysis of ATP to ADP and inorganic phosphate. In Salmonella paratyphi A (strain ATCC 9150 / SARB42), this protein is 5-oxoprolinase subunit A.